We begin with the raw amino-acid sequence, 356 residues long: Carbohydrate sulfotransferase 10 (356 aa).

Topologically, residues 1 to 6 are cytoplasmic; it reads MHHQWL. A helical; Signal-anchor for type II membrane protein membrane pass occupies residues 7–27; that stretch reads LLAACFWVIFMFMVASKFITL. Residues 28-356 are Lumenal-facing; it reads TFKDPDGYSA…GYQKPDFLLN (329 aa). The N-linked (GlcNAc...) asparagine glycan is linked to N99. 3'-phosphoadenylyl sulfate-binding positions include 127 to 133 and 189 to 197; these read PKVGNTQ and RDPFERLIS. N228 and N316 each carry an N-linked (GlcNAc...) asparagine glycan.

Belongs to the sulfotransferase 2 family.

It is found in the golgi apparatus membrane. The enzyme catalyses 3-O-{beta-D-GlcA-(1-&gt;[3)-alpha-D-Xyl-(1-&gt;3)-beta-D-GlcA-(1-&gt;](n)-4)-beta-D-Xyl-(1-&gt;4)-Rib-ol-P-Rib-ol-P-3-beta-D-GalNAc-(1-&gt;3)-beta-D-GlcNAc-(1-&gt;4)-O-6-P-alpha-D-Man}-L-Thr-[protein] + 3'-phosphoadenylyl sulfate = 3-O-{O-3-S-beta-D-GlcA-(1-&gt;[3)-alpha-D-Xyl-(1-&gt;3)-beta-D-GlcA-(1-&gt;](n)-4)-beta-D-Xyl-(1-&gt;4)-Rib-ol-P-Rib-ol-P-3-beta-D-GalNAc-(1-&gt;3)-beta-D-GlcNAc-(1-&gt;4)-O-6-P-alpha-D-Man}-L-Thr-[protein] + adenosine 3',5'-bisphosphate + H(+). It carries out the reaction 17beta-estradiol 3-O-(beta-D-glucuronate) + 3'-phosphoadenylyl sulfate = 17beta-estradiol 3-O-(3-sulfo-beta-D-glucuronate) + adenosine 3',5'-bisphosphate + H(+). It catalyses the reaction 17beta-estradiol 3-O-(beta-D-glucuronate) 17-sulfate + 3'-phosphoadenylyl sulfate = 17beta-estradiol 3-O-(3-sulfo-beta-D-glucuronate) 17-sulfate + adenosine 3',5'-bisphosphate + H(+). The catalysed reaction is 17beta-estradiol 17-O-(beta-D-glucuronate) + 3'-phosphoadenylyl sulfate = 17beta-estradiol 17-O-(3-sulfo-beta-D-glucuronate) + adenosine 3',5'-bisphosphate + H(+). The enzyme catalyses 16alpha,17beta-estriol 3-O-(beta-D-glucuronate) + 3'-phosphoadenylyl sulfate = 16alpha,17beta-estriol 3-O-(3-sulfo-beta-D-glucuronate) + adenosine 3',5'-bisphosphate + H(+). It carries out the reaction 16alpha,17beta-estriol 16-O-(beta-D-glucuronate) + 3'-phosphoadenylyl sulfate = 16alpha,17beta-estriol 16-O-(3-sulfo-beta-D-glucuronate) + adenosine 3',5'-bisphosphate + H(+). It catalyses the reaction 16alpha,17beta-estriol 17-O-(beta-D-glucuronate) + 3'-phosphoadenylyl sulfate = 16alpha,17beta-estriol 17-O-(3-sulfo-beta-D-glucuronate) + adenosine 3',5'-bisphosphate + H(+). The catalysed reaction is estrone 3-O-(beta-D-glucuronate) + 3'-phosphoadenylyl sulfate = estrone 3-O-(3-sulfo-beta-D-glucuronate) + adenosine 3',5'-bisphosphate + H(+). The enzyme catalyses 3alpha,20alpha-dihydroxy-5beta-pregnane 3-O-(beta-D-glucuronate) + 3'-phosphoadenylyl sulfate = 3alpha,20alpha-dihydroxy-5beta-pregnane 3-O-(3-sulfo-beta-D-glucuronate) + adenosine 3',5'-bisphosphate + H(+). It carries out the reaction testosterone 17-O-(beta-D-glucuronate) + 3'-phosphoadenylyl sulfate = testosterone 17-O-(3-sulfo-beta-D-glucuronate) + adenosine 3',5'-bisphosphate + H(+). It catalyses the reaction 3beta-androst-5-en-17-one 3-O-(beta-D-glucuronate) + 3'-phosphoadenylyl sulfate = 3beta-androst-5-en-17-one 3-O-(3-sulfo-beta-D-glucuronate) + adenosine 3',5'-bisphosphate + H(+). The catalysed reaction is 3alpha,17alpha-dihydroxy-5beta-androstane-11-one-17beta-carboxylate 3-O-(beta-D-glucuronate) + 3'-phosphoadenylyl sulfate = 3alpha,17alpha-dihydroxy-5beta-androstane-11-one-17beta-carboxylate 3-O-(3-sulfo-beta-D-glucuronate) + adenosine 3',5'-bisphosphate + H(+). The enzyme catalyses 3alpha-hydroxyetiocholan-17-one 3-O-(beta-D-glucuronate) + 3'-phosphoadenylyl sulfate = 3alpha-hydroxyetiocholan-17-one 3-O-(3-sulfo-beta-D-glucuronate) + adenosine 3',5'-bisphosphate + H(+). It functions in the pathway steroid metabolism. Its pathway is protein modification; carbohydrate sulfation. Functionally, catalyzes the transfer of sulfate from 3'-phosphoadenylyl sulfate (PAPS) to position 3 of terminal glucuronic acid of both protein- and lipid-linked oligosaccharides. Participates in biosynthesis of HNK-1 carbohydrate structure 3-O-sulfo-beta-D-GlcA-(1-&gt;3)-beta-D-Gal-(1-&gt;4)-D-GlcNAc-R, a sulfated glucuronyl-lactosaminyl residue carried by many neural recognition molecules, which is involved in cell interactions during ontogenetic development and in synaptic plasticity in the adult. May be indirectly involved in synapse plasticity of the hippocampus, via its role in HNK-1 biosynthesis. Sulfates terminal glucuronyl residue of the laminin globular (LG)-domain binding epitope on DAG1/alpha-dystroglycan and prevents further polymerization by LARGE1 glycosyltransferase. Likely defines the chain length of LG epitope, conferring binding specificity to extracellular matrix components. Plays a role in down-regulating the steroid hormones. Sulfates glucuronidated estrogens and androgens with an impact in hormone cycle and fertility. Has a preference for glucuronyl moiety at the 3-hydroxyl group of a sterol ring rather than the 17-hydroxyl group, showing high catalytic efficiency for 17beta-estradiol 3-O-(beta-D-glucuronate) and dehydroepiandrosterone 3-O-(beta-D-glucuronate) hormones. This chain is Carbohydrate sulfotransferase 10, found in Mus musculus (Mouse).